Consider the following 507-residue polypeptide: Glycerol kinase 2 (507 aa).

Residue Thr16 participates in ADP binding. Residues Thr16, Thr17, and Ser18 each coordinate ATP. Position 16 (Thr16) interacts with sn-glycerol 3-phosphate. Arg20 lines the ADP pocket. Positions 86, 87, 138, and 248 each coordinate sn-glycerol 3-phosphate. 5 residues coordinate glycerol: Arg86, Glu87, Tyr138, Asp248, and Gln249. ADP-binding residues include Thr270 and Gly314. The ATP site is built by Thr270, Gly314, Gln318, and Gly415. The ADP site is built by Gly415 and Asn419.

Belongs to the FGGY kinase family.

It catalyses the reaction glycerol + ATP = sn-glycerol 3-phosphate + ADP + H(+). The protein operates within polyol metabolism; glycerol degradation via glycerol kinase pathway; sn-glycerol 3-phosphate from glycerol: step 1/1. Inhibited by fructose 1,6-bisphosphate (FBP). Key enzyme in the regulation of glycerol uptake and metabolism. Catalyzes the phosphorylation of glycerol to yield sn-glycerol 3-phosphate. The protein is Glycerol kinase 2 of Streptomyces avermitilis (strain ATCC 31267 / DSM 46492 / JCM 5070 / NBRC 14893 / NCIMB 12804 / NRRL 8165 / MA-4680).